The primary structure comprises 684 residues: Histone-lysine N-methyltransferase SETMAR (684 aa).

The interval 1 to 345 is histone-lysine N-methyltransferase; sequence MFAEAAKTTR…RLTLETMKMM (345 aa). Positions 73–136 constitute a Pre-SET domain; it reads PGCICVKTPC…HCRNRVVQKG (64 aa). Positions 75, 77, 82, 87, 89, 118, 122, 124, and 128 each coordinate Zn(2+). In terms of domain architecture, SET spans 139 to 263; it reads FHFQVFKTHK…PEEELSYDYS (125 aa). S-adenosyl-L-methionine is bound by residues 149–151, Tyr-192, Arg-220, and 223–224; these read KGW and NH. The Zn(2+) site is built by Cys-226, Cys-287, Cys-289, and Cys-294. The Post-SET domain maps to 283 to 299; it reads LRKPCYCGAKSCTAFLP. Residues 346-684 are mariner transposase Hsmar1; that stretch reads LDKKQIRAIF…CVDCNGSYFD (339 aa). 2 DNA-binding regions (H-T-H motif) span residues 364 to 395 and 428 to 448; these read KAAETTRNINNAFGPGTANERTVQWWFKKFCK and TTREVAEELNVNHSTVVRHLK. Mg(2+) is bound at residue Asp-496. Lys-498 bears the N6-methyllysine mark. Ser-508 is modified (phosphoserine; by CHEK1). Position 588 (Asp-588) interacts with Mg(2+).

The protein in the N-terminal section; belongs to the class V-like SAM-binding methyltransferase superfamily. In the C-terminal section; belongs to the mariner transposase family. As to quaternary structure, homodimer. Interacts with PRPF19; required for SETMAR recruitment to damaged DNA sites. Interacts with PCNA. Interacts with TOP2A; stimulates TOP2A topoisomerase activity. May interact with RAD9A and/or RAD9B. Mg(2+) is required as a cofactor. In terms of processing, methylated. Methylation regulates activity in DNA decatenation. Post-translationally, phosphorylated at Ser-508 by CHEK1 and dephosphorylated by protein phosphatase 2A/PP2A. Phosphorylation at Ser-508 is enhanced by DNA damage and promotes recruitment to damaged DNA. It stimulates DNA repair and impairs replication fork restart. In terms of tissue distribution, widely expressed, with highest expression in placenta and ovary and lowest expression in skeletal muscle.

It localises to the nucleus. Its subcellular location is the chromosome. It catalyses the reaction L-lysyl(36)-[histone H3] + 2 S-adenosyl-L-methionine = N(6),N(6)-dimethyl-L-lysyl(36)-[histone H3] + 2 S-adenosyl-L-homocysteine + 2 H(+). In terms of biological role, protein derived from the fusion of a methylase with the transposase of an Hsmar1 transposon that plays a role in DNA double-strand break repair, stalled replication fork restart and DNA integration. DNA-binding protein, it is indirectly recruited to sites of DNA damage through protein-protein interactions. Also has kept a sequence-specific DNA-binding activity recognizing the 19-mer core of the 5'-terminal inverted repeats (TIRs) of the Hsmar1 element and displays a DNA nicking and end joining activity. In parallel, has a histone methyltransferase activity and methylates 'Lys-4' and 'Lys-36' of histone H3. Specifically mediates dimethylation of H3 'Lys-36' at sites of DNA double-strand break and may recruit proteins required for efficient DSB repair through non-homologous end-joining. Also regulates replication fork processing, promoting replication fork restart and regulating DNA decatenation through stimulation of the topoisomerase activity of TOP2A. This Homo sapiens (Human) protein is Histone-lysine N-methyltransferase SETMAR.